The chain runs to 153 residues: Actin-related protein 2/3 complex subunit 5-like protein (153 aa).

Serine 64 bears the Phosphoserine mark.

It belongs to the ARPC5 family. As to quaternary structure, may be a component of the Arp2/3 complex in which it may replace ARPC5.

It localises to the cytoplasm. The protein resides in the cytoskeleton. May function as component of the Arp2/3 complex which is involved in regulation of actin polymerization and together with an activating nucleation-promoting factor (NPF) mediates the formation of branched actin networks. The chain is Actin-related protein 2/3 complex subunit 5-like protein (ARPC5L) from Pongo abelii (Sumatran orangutan).